The primary structure comprises 326 residues: Acetyl-coenzyme A carboxylase carboxyl transferase subunit beta (326 aa).

A CoA carboxyltransferase N-terminal domain is found at 32-301 (LWTKCPACGV…ILPPLNADSN (270 aa)). Residues C36, C39, C55, and C58 each coordinate Zn(2+). A C4-type zinc finger spans residues 36 to 58 (CPACGVLTYTKDLQGNWMVCVEC).

The protein belongs to the AccD/PCCB family. Acetyl-CoA carboxylase is a heterohexamer composed of biotin carboxyl carrier protein (AccB), biotin carboxylase (AccC) and two subunits each of ACCase subunit alpha (AccA) and ACCase subunit beta (AccD). Requires Zn(2+) as cofactor.

It localises to the cytoplasm. The enzyme catalyses N(6)-carboxybiotinyl-L-lysyl-[protein] + acetyl-CoA = N(6)-biotinyl-L-lysyl-[protein] + malonyl-CoA. It participates in lipid metabolism; malonyl-CoA biosynthesis; malonyl-CoA from acetyl-CoA: step 1/1. Component of the acetyl coenzyme A carboxylase (ACC) complex. Biotin carboxylase (BC) catalyzes the carboxylation of biotin on its carrier protein (BCCP) and then the CO(2) group is transferred by the transcarboxylase to acetyl-CoA to form malonyl-CoA. The polypeptide is Acetyl-coenzyme A carboxylase carboxyl transferase subunit beta (Synechocystis sp. (strain ATCC 27184 / PCC 6803 / Kazusa)).